A 37-amino-acid polypeptide reads, in one-letter code: Cytochrome b6-f complex subunit 5 (37 aa).

A helical transmembrane segment spans residues 5–25; sequence LLFGIVLGLIPVTLVGLFVAA.

Belongs to the PetG family. The 4 large subunits of the cytochrome b6-f complex are cytochrome b6, subunit IV (17 kDa polypeptide, PetD), cytochrome f and the Rieske protein, while the 4 small subunits are PetG, PetL, PetM and PetN. The complex functions as a dimer.

The protein resides in the plastid. It is found in the chloroplast thylakoid membrane. Component of the cytochrome b6-f complex, which mediates electron transfer between photosystem II (PSII) and photosystem I (PSI), cyclic electron flow around PSI, and state transitions. PetG is required for either the stability or assembly of the cytochrome b6-f complex. The polypeptide is Cytochrome b6-f complex subunit 5 (Rhodomonas salina (Cryptomonas salina)).